The chain runs to 600 residues: MKITEKLEQHRQTSGKPTYSFEYFVPKTTQGVQNLYDRMDRMYEASLPQFIDITWNAGGGRLSHLSTDLVATAQSVLGLETCMHLTCTNMPISMIDDALENAYHSGCQNILALRGDPPRDAENWTPVEGGFQYAKDLIKYIKSKYGDHFAIGVAGYPECHPELPNKDVKLDLEYLKQKIDAGGDFIITQMFYDVDNFINWCSQVRAAGMDVPIIPGIMPITTYAAFLRRAQWGQISIPQHFSSRLDPIKDDDELVRDIGTNLIVEMCQKLLDSGYVSHLHIYTMNLEKAPLMILERLNILPTESEFNAHPLAVLPWRKSLNPKRKNEEVRPIFWKRRPYSYVARTSQWAVDEFPNGRFGDSSSPAFGDLDLCGSDLIRQSANKCLELWSTPTSINDVAFLVINYLNGNLKCLPWSDIPINDEINPIKAHLIELNQHSIITINSQPQVNGIRSNDKIHGWGPKDGYVYQKQYLEFMLPKTKLPKLIDTLKNNEFLTYFAIDSQGDLLSNHPDNSKSNAVTWGIFPGREILQPTIVEKISFLAWKEEFYHILNEWKLNMNKYDKPHSAQFIQSLIDDYCLVNIVDNDYISPDDQIHSILLSL.

Residue E22 is the Proton donor/acceptor of the active site. NAD(+) is bound by residues 22–27 (EYFVPK) and 54–55 (TW). FAD-binding positions include 54-55 (TW), H84, 114-116 (RGD), 133-134 (YA), Y156, D171, and K178. D116 serves as a coordination point for substrate. The substrate site is built by Q189 and Y282.

Belongs to the methylenetetrahydrofolate reductase family. The cofactor is FAD.

The catalysed reaction is (6S)-5-methyl-5,6,7,8-tetrahydrofolate + NADP(+) = (6R)-5,10-methylene-5,6,7,8-tetrahydrofolate + NADPH + H(+). The protein operates within one-carbon metabolism; tetrahydrofolate interconversion. This chain is Methylenetetrahydrofolate reductase 2 (MET13), found in Saccharomyces cerevisiae (strain ATCC 204508 / S288c) (Baker's yeast).